Reading from the N-terminus, the 359-residue chain is Acetoin catabolism protein X (359 aa).

It localises to the cell membrane. The protein operates within ketone degradation; acetoin degradation. In terms of biological role, essential for acetoin catabolism. The protein is Acetoin catabolism protein X (acoX) of Cupriavidus necator (strain ATCC 17699 / DSM 428 / KCTC 22496 / NCIMB 10442 / H16 / Stanier 337) (Ralstonia eutropha).